A 353-amino-acid chain; its full sequence is Nicotinate-nucleotide--dimethylbenzimidazole phosphoribosyltransferase (353 aa).

E318 functions as the Proton acceptor in the catalytic mechanism.

This sequence belongs to the CobT family.

The enzyme catalyses 5,6-dimethylbenzimidazole + nicotinate beta-D-ribonucleotide = alpha-ribazole 5'-phosphate + nicotinate + H(+). Its pathway is nucleoside biosynthesis; alpha-ribazole biosynthesis; alpha-ribazole from 5,6-dimethylbenzimidazole: step 1/2. Catalyzes the synthesis of alpha-ribazole-5'-phosphate from nicotinate mononucleotide (NAMN) and 5,6-dimethylbenzimidazole (DMB). The polypeptide is Nicotinate-nucleotide--dimethylbenzimidazole phosphoribosyltransferase (Roseiflexus castenholzii (strain DSM 13941 / HLO8)).